The primary structure comprises 504 residues: ATP synthase subunit alpha (504 aa).

171–178 provides a ligand contact to ATP; the sequence is GDRQTGKT.

The protein belongs to the ATPase alpha/beta chains family. In terms of assembly, F-type ATPases have 2 components, CF(1) - the catalytic core - and CF(0) - the membrane proton channel. CF(1) has five subunits: alpha(3), beta(3), gamma(1), delta(1), epsilon(1). CF(0) has three main subunits: a(1), b(2) and c(9-12). The alpha and beta chains form an alternating ring which encloses part of the gamma chain. CF(1) is attached to CF(0) by a central stalk formed by the gamma and epsilon chains, while a peripheral stalk is formed by the delta and b chains.

Its subcellular location is the cell inner membrane. It catalyses the reaction ATP + H2O + 4 H(+)(in) = ADP + phosphate + 5 H(+)(out). Its function is as follows. Produces ATP from ADP in the presence of a proton gradient across the membrane. The alpha chain is a regulatory subunit. This is ATP synthase subunit alpha from Sulfurovum sp. (strain NBC37-1).